A 135-amino-acid chain; its full sequence is Small ribosomal subunit protein uS12 (135 aa).

Residue Asp89 is modified to 3-methylthioaspartic acid. The segment at 108 to 135 is disordered; that stretch reads NKRTVSRSKYGTKKAKATDKKATDNKKK. Positions 111-122 are enriched in basic residues; that stretch reads TVSRSKYGTKKA. Residues 123–135 show a composition bias toward basic and acidic residues; that stretch reads KATDKKATDNKKK.

Belongs to the universal ribosomal protein uS12 family. As to quaternary structure, part of the 30S ribosomal subunit. Contacts proteins S8 and S17. May interact with IF1 in the 30S initiation complex.

With S4 and S5 plays an important role in translational accuracy. In terms of biological role, interacts with and stabilizes bases of the 16S rRNA that are involved in tRNA selection in the A site and with the mRNA backbone. Located at the interface of the 30S and 50S subunits, it traverses the body of the 30S subunit contacting proteins on the other side and probably holding the rRNA structure together. The combined cluster of proteins S8, S12 and S17 appears to hold together the shoulder and platform of the 30S subunit. This is Small ribosomal subunit protein uS12 from Helicobacter pylori (strain P12).